The chain runs to 201 residues: ATP synthase subunit b 2 (201 aa).

The segment covering 1-17 has biased composition (polar residues); it reads MAEQKNPLTTPSPNADT. The tract at residues 1–39 is disordered; it reads MAEQKNPLTTPSPNADTTIVPAGSPHTHTEQPSGGHGGA. A helical membrane pass occupies residues 47–66; that stretch reads TFLSQLIWLALAFGLLYYLM.

This sequence belongs to the ATPase B chain family. F-type ATPases have 2 components, F(1) - the catalytic core - and F(0) - the membrane proton channel. F(1) has five subunits: alpha(3), beta(3), gamma(1), delta(1), epsilon(1). F(0) has three main subunits: a(1), b(2) and c(10-14). The alpha and beta chains form an alternating ring which encloses part of the gamma chain. F(1) is attached to F(0) by a central stalk formed by the gamma and epsilon chains, while a peripheral stalk is formed by the delta and b chains.

It localises to the cell inner membrane. In terms of biological role, f(1)F(0) ATP synthase produces ATP from ADP in the presence of a proton or sodium gradient. F-type ATPases consist of two structural domains, F(1) containing the extramembraneous catalytic core and F(0) containing the membrane proton channel, linked together by a central stalk and a peripheral stalk. During catalysis, ATP synthesis in the catalytic domain of F(1) is coupled via a rotary mechanism of the central stalk subunits to proton translocation. Functionally, component of the F(0) channel, it forms part of the peripheral stalk, linking F(1) to F(0). The b'-subunit is a diverged and duplicated form of b found in plants and photosynthetic bacteria. This chain is ATP synthase subunit b 2 (atpF2), found in Methylorubrum extorquens (strain PA1) (Methylobacterium extorquens).